Here is a 252-residue protein sequence, read N- to C-terminus: Probable transcriptional regulatory protein Caur_1043 (252 aa).

A compositionally biased stretch (basic residues) spans Met-1–Lys-14. The segment at Met-1–Gly-22 is disordered.

Belongs to the TACO1 family.

It is found in the cytoplasm. This is Probable transcriptional regulatory protein Caur_1043 from Chloroflexus aurantiacus (strain ATCC 29366 / DSM 635 / J-10-fl).